A 244-amino-acid polypeptide reads, in one-letter code: Serine acetyltransferase (244 aa).

It belongs to the transferase hexapeptide repeat family.

The protein localises to the cytoplasm. The enzyme catalyses L-serine + acetyl-CoA = O-acetyl-L-serine + CoA. The protein operates within amino-acid biosynthesis; L-cysteine biosynthesis; L-cysteine from L-serine: step 1/2. This chain is Serine acetyltransferase (cysE), found in Synechococcus elongatus (strain ATCC 33912 / PCC 7942 / FACHB-805) (Anacystis nidulans R2).